Here is a 132-residue protein sequence, read N- to C-terminus: Small ribosomal subunit protein uS8 (132 aa).

It belongs to the universal ribosomal protein uS8 family. Part of the 30S ribosomal subunit. Contacts proteins S5 and S12.

Functionally, one of the primary rRNA binding proteins, it binds directly to 16S rRNA central domain where it helps coordinate assembly of the platform of the 30S subunit. This Syntrophomonas wolfei subsp. wolfei (strain DSM 2245B / Goettingen) protein is Small ribosomal subunit protein uS8.